A 247-amino-acid chain; its full sequence is Suppressor of silencing P0 (247 aa).

Residues 76 to 95 form the F-box-like domain; the sequence is LPRHLHYECLEWGLLCGTHP.

Belongs to the polerovirus P0 protein family.

Suppressor of RNA-mediated gene silencing, also known as post-transcriptional gene silencing (PTGS), a mechanism of plant viral defense that limits the accumulation of viral RNAs. The P0 protein suppresses local PTGS using its F-box-like domain to mediate destabilization and degradation of the AGO1 protein, although not via an interaction with host SKP1A. Participates, together with the proteins P1 and P7, in the inhibition of the induction of aphid-induced host phytohormones. This could play a role in the attraction to the infected plants by aphids. The protein is Suppressor of silencing P0 of Potato leafroll virus (strain Potato/Scotland/strain 1/1984) (PLrV).